We begin with the raw amino-acid sequence, 552 residues long: Urocanate hydratase (552 aa).

NAD(+)-binding positions include 49 to 50 (GG), Gln-127, 173 to 175 (GMG), Asp-193, 239 to 240 (NA), 260 to 264 (QTSAH), 270 to 271 (YI), and Tyr-319. Cys-407 is a catalytic residue. Gly-489 provides a ligand contact to NAD(+).

This sequence belongs to the urocanase family. Requires NAD(+) as cofactor.

The protein localises to the cytoplasm. It carries out the reaction 4-imidazolone-5-propanoate = trans-urocanate + H2O. It participates in amino-acid degradation; L-histidine degradation into L-glutamate; N-formimidoyl-L-glutamate from L-histidine: step 2/3. Functionally, catalyzes the conversion of urocanate to 4-imidazolone-5-propionate. In Bacillus mycoides (strain KBAB4) (Bacillus weihenstephanensis), this protein is Urocanate hydratase.